A 354-amino-acid polypeptide reads, in one-letter code: 5,10-methenyltetrahydromethanopterin hydrogenase (354 aa).

This sequence belongs to the HMD family.

The catalysed reaction is 5,10-methenyl-5,6,7,8-tetrahydromethanopterin + H2 = 5,10-methylenetetrahydromethanopterin + H(+). The protein operates within one-carbon metabolism; methanogenesis from CO(2); 5,10-methylene-5,6,7,8-tetrahydromethanopterin from 5,10-methenyl-5,6,7,8-tetrahydromethanopterin (hydrogen route): step 1/1. Functionally, catalyzes the reversible reduction of methenyl-H(4)MPT(+) to methylene-H(4)MPT. The chain is 5,10-methenyltetrahydromethanopterin hydrogenase from Methanococcus vannielii (strain ATCC 35089 / DSM 1224 / JCM 13029 / OCM 148 / SB).